We begin with the raw amino-acid sequence, 464 residues long: Anthranilate synthase component 1 (464 aa).

Residues Ser41 and 236-238 (PYM) contribute to the L-tryptophan site. 271-272 (GT) is a binding site for chorismate. Glu298 is a binding site for Mg(2+). Chorismate is bound by residues Tyr386, Arg406, 420–422 (GAG), and Gly422. Glu435 contributes to the Mg(2+) binding site.

The protein belongs to the anthranilate synthase component I family. Heterotetramer consisting of two non-identical subunits: a beta subunit (TrpG) and a large alpha subunit (TrpE). Requires Mg(2+) as cofactor.

The enzyme catalyses chorismate + L-glutamine = anthranilate + pyruvate + L-glutamate + H(+). It functions in the pathway amino-acid biosynthesis; L-tryptophan biosynthesis; L-tryptophan from chorismate: step 1/5. Its activity is regulated as follows. Feedback inhibited by tryptophan. Part of a heterotetrameric complex that catalyzes the two-step biosynthesis of anthranilate, an intermediate in the biosynthesis of L-tryptophan. In the first step, the glutamine-binding beta subunit (TrpG) of anthranilate synthase (AS) provides the glutamine amidotransferase activity which generates ammonia as a substrate that, along with chorismate, is used in the second step, catalyzed by the large alpha subunit of AS (TrpE) to produce anthranilate. In the absence of TrpG, TrpE can synthesize anthranilate directly from chorismate and high concentrations of ammonia. The polypeptide is Anthranilate synthase component 1 (trpE) (Methanothermobacter thermautotrophicus (strain ATCC 29096 / DSM 1053 / JCM 10044 / NBRC 100330 / Delta H) (Methanobacterium thermoautotrophicum)).